Reading from the N-terminus, the 516-residue chain is Phosphatidylserine decarboxylase proenzyme 2, mitochondrial (516 aa).

The N-terminal 21 residues, 1–21 (MRPRQRFRRFHPRWSKVNLRG), are a transit peptide targeting the mitochondrion. The Mitochondrial matrix portion of the chain corresponds to 22 to 33 (FGGVGALKGVKA). A helical transmembrane segment spans residues 34-52 (LNGMNVRVSMRLKWISNRI). Topologically, residues 53–516 (HRIRRSRRLG…GQYVRVGEAL (464 aa)) are mitochondrial intermembrane. Active-site charge relay system; for autoendoproteolytic cleavage activity residues include aspartate 159, histidine 373, and serine 488. Serine 488 serves as the catalytic Schiff-base intermediate with substrate; via pyruvic acid; for decarboxylase activity. Serine 488 carries the post-translational modification Pyruvic acid (Ser); by autocatalysis.

The protein belongs to the phosphatidylserine decarboxylase family. PSD-B subfamily. Eukaryotic type I sub-subfamily. As to quaternary structure, heterodimer of a large membrane-associated beta subunit and a small pyruvoyl-containing alpha subunit. Requires pyruvate as cofactor. Post-translationally, is synthesized initially as an inactive proenzyme. Formation of the active enzyme involves a self-maturation process in which the active site pyruvoyl group is generated from an internal serine residue via an autocatalytic post-translational modification. Two non-identical subunits are generated from the proenzyme in this reaction, and the pyruvate is formed at the N-terminus of the alpha chain, which is derived from the carboxyl end of the proenzyme. The autoendoproteolytic cleavage occurs by a canonical serine protease mechanism, in which the side chain hydroxyl group of the serine supplies its oxygen atom to form the C-terminus of the beta chain, while the remainder of the serine residue undergoes an oxidative deamination to produce ammonia and the pyruvoyl prosthetic group on the alpha chain. During this reaction, the Ser that is part of the protease active site of the proenzyme becomes the pyruvoyl prosthetic group, which constitutes an essential element of the active site of the mature decarboxylase.

The protein localises to the mitochondrion. It is found in the mitochondrion inner membrane. Its subcellular location is the nucleus envelope. It localises to the lipid droplet. The protein resides in the endoplasmic reticulum membrane. It carries out the reaction a 1,2-diacyl-sn-glycero-3-phospho-L-serine + H(+) = a 1,2-diacyl-sn-glycero-3-phosphoethanolamine + CO2. It participates in phospholipid metabolism; phosphatidylethanolamine biosynthesis; phosphatidylethanolamine from CDP-diacylglycerol: step 2/2. Catalyzes the formation of phosphatidylethanolamine (PtdEtn) from phosphatidylserine (PtdSer). Plays a central role in phospholipid metabolism and in the interorganelle trafficking of phosphatidylserine. Together with psd1 and psd3, responsible for the majority of phosphatidylethanolamine synthesis. Plays a role in lipid droplet biogenesis at the endoplasmic reticulum membrane. This chain is Phosphatidylserine decarboxylase proenzyme 2, mitochondrial, found in Schizosaccharomyces pombe (strain 972 / ATCC 24843) (Fission yeast).